The chain runs to 488 residues: 3-octaprenyl-4-hydroxybenzoate carboxy-lyase (488 aa).

Asn172 is a Mn(2+) binding site. Residues 175 to 177, 189 to 191, and 194 to 195 contribute to the prenylated FMN site; these read IYR, RWL, and RG. Glu238 provides a ligand contact to Mn(2+). Asp287 functions as the Proton donor in the catalytic mechanism.

Belongs to the UbiD family. Homohexamer. It depends on prenylated FMN as a cofactor. Mn(2+) is required as a cofactor.

The protein resides in the cell membrane. The enzyme catalyses a 4-hydroxy-3-(all-trans-polyprenyl)benzoate + H(+) = a 2-(all-trans-polyprenyl)phenol + CO2. Its pathway is cofactor biosynthesis; ubiquinone biosynthesis. Catalyzes the decarboxylation of 3-octaprenyl-4-hydroxy benzoate to 2-octaprenylphenol, an intermediate step in ubiquinone biosynthesis. This Pseudomonas fluorescens (strain SBW25) protein is 3-octaprenyl-4-hydroxybenzoate carboxy-lyase.